Reading from the N-terminus, the 435-residue chain is MDILQSINDFNEAKQVIPGGVNSPVRAFGSVGGTPRFIAKGKGAYIYDEDDNEYIDFVQSWGPLIFGHANEVIESALSLAIKDGLSFGAPTEKETTLVKQIIALSGSAEKMRLVNSGTEATMSALRLARAYSNKDDIIKFEGCYHGHSDSLLVSAGSGCATFGTPSSPGVPNDITKHTLVARYNDIESVRACFEQSKNVACVIIEALAGNMGFVPADKKFMQDLRALCDEYNALLIIDEVMSGFRAGLKGAIGLYDVQADLVTYGKVIGGGMPLAAFGGRADIMDMLSPVGGVYQAGTLSGNPIAVSAGLATLLQIKANPTLYEHLEVLAKRLIKGLKEAAQSYEIPLQVDCRGSMFGFFFNQKEVKNFDDAKCSDTAMFARFHQKMLDKGVYFACSQFETGFICSAMNEMIIDEVIMKAKAVFGEITHEIESRI.

K266 is modified (N6-(pyridoxal phosphate)lysine).

This sequence belongs to the class-III pyridoxal-phosphate-dependent aminotransferase family. HemL subfamily. In terms of assembly, homodimer. It depends on pyridoxal 5'-phosphate as a cofactor.

The protein resides in the cytoplasm. It carries out the reaction (S)-4-amino-5-oxopentanoate = 5-aminolevulinate. It participates in porphyrin-containing compound metabolism; protoporphyrin-IX biosynthesis; 5-aminolevulinate from L-glutamyl-tRNA(Glu): step 2/2. This Helicobacter hepaticus (strain ATCC 51449 / 3B1) protein is Glutamate-1-semialdehyde 2,1-aminomutase.